Here is an 89-residue protein sequence, read N- to C-terminus: Small ribosomal subunit protein uS15 (89 aa).

It belongs to the universal ribosomal protein uS15 family. As to quaternary structure, part of the 30S ribosomal subunit. Forms a bridge to the 50S subunit in the 70S ribosome, contacting the 23S rRNA.

One of the primary rRNA binding proteins, it binds directly to 16S rRNA where it helps nucleate assembly of the platform of the 30S subunit by binding and bridging several RNA helices of the 16S rRNA. Its function is as follows. Forms an intersubunit bridge (bridge B4) with the 23S rRNA of the 50S subunit in the ribosome. The protein is Small ribosomal subunit protein uS15 of Nitrosomonas eutropha (strain DSM 101675 / C91 / Nm57).